The chain runs to 99 residues: uncharacterized protein (99 aa).

The first 17 residues, 1–17, serve as a signal peptide directing secretion; the sequence is MMMNAFFPAMALMVLVG. Cysteine 18 carries the N-palmitoyl cysteine lipid modification. The S-diacylglycerol cysteine moiety is linked to residue cysteine 18.

The protein localises to the cell membrane. This is an uncharacterized protein from Shigella flexneri.